The following is a 198-amino-acid chain: FMN-dependent NADH:quinone oxidoreductase (198 aa).

Serine 10 serves as a coordination point for FMN.

Belongs to the azoreductase type 1 family. Homodimer. The cofactor is FMN.

It carries out the reaction 2 a quinone + NADH + H(+) = 2 a 1,4-benzosemiquinone + NAD(+). The catalysed reaction is N,N-dimethyl-1,4-phenylenediamine + anthranilate + 2 NAD(+) = 2-(4-dimethylaminophenyl)diazenylbenzoate + 2 NADH + 2 H(+). Functionally, quinone reductase that provides resistance to thiol-specific stress caused by electrophilic quinones. Its function is as follows. Also exhibits azoreductase activity. Catalyzes the reductive cleavage of the azo bond in aromatic azo compounds to the corresponding amines. This chain is FMN-dependent NADH:quinone oxidoreductase, found in Paraburkholderia phymatum (strain DSM 17167 / CIP 108236 / LMG 21445 / STM815) (Burkholderia phymatum).